Consider the following 251-residue polypeptide: uncharacterized protein (251 aa).

4 helical membrane passes run 56–76, 104–124, 184–204, and 208–228; these read LAVV…TLVA, IITV…FLLT, HGFV…LIIV, and YLIA…ANIS.

Its subcellular location is the membrane. This is an uncharacterized protein from Caenorhabditis elegans.